Consider the following 234-residue polypeptide: MAKLTKRMRVIRDKVDATKQYDITEAIALLKELATAKFVESVDVAVNLGIDARKSDQNVRGATVLPHGTGRSVRVAVFTQGANAEAAKAAGAELVGMEDLAEQIKKGEMNFDVVIASPDAMRVVGQLGQISGPRGLMPNPKVGTVTPNVAEAVKNAKAGQVRYRNDKNGIIHTTIGKVDFDADKLKENLEALLVALKKAKPSQAKGMYIKKVSLSTTMGAGVAIDQSGLSAAAN.

The protein belongs to the universal ribosomal protein uL1 family. Part of the 50S ribosomal subunit.

Functionally, binds directly to 23S rRNA. The L1 stalk is quite mobile in the ribosome, and is involved in E site tRNA release. In terms of biological role, protein L1 is also a translational repressor protein, it controls the translation of the L11 operon by binding to its mRNA. The protein is Large ribosomal subunit protein uL1 of Serratia marcescens.